Here is a 617-residue protein sequence, read N- to C-terminus: Probable Xaa-Pro aminopeptidase P (617 aa).

Residues Asp-414, Asp-425, Glu-523, and Glu-537 each coordinate Mn(2+).

The protein belongs to the peptidase M24B family. It depends on Mn(2+) as a cofactor.

It carries out the reaction Release of any N-terminal amino acid, including proline, that is linked to proline, even from a dipeptide or tripeptide.. Functionally, catalyzes the removal of a penultimate prolyl residue from the N-termini of peptides. This chain is Probable Xaa-Pro aminopeptidase P (AMPP), found in Ajellomyces dermatitidis (strain ER-3 / ATCC MYA-2586) (Blastomyces dermatitidis).